A 305-amino-acid chain; its full sequence is UDP-N-acetylenolpyruvoylglucosamine reductase (305 aa).

Residues 33–198 (RVGGPAQVLF…TGGTFRGRRA (166 aa)) enclose the FAD-binding PCMH-type domain. The active site involves arginine 178. Serine 227 functions as the Proton donor in the catalytic mechanism. Residue glutamate 297 is part of the active site.

This sequence belongs to the MurB family. FAD is required as a cofactor.

The protein resides in the cytoplasm. The enzyme catalyses UDP-N-acetyl-alpha-D-muramate + NADP(+) = UDP-N-acetyl-3-O-(1-carboxyvinyl)-alpha-D-glucosamine + NADPH + H(+). It participates in cell wall biogenesis; peptidoglycan biosynthesis. In terms of biological role, cell wall formation. The chain is UDP-N-acetylenolpyruvoylglucosamine reductase from Nitrobacter hamburgensis (strain DSM 10229 / NCIMB 13809 / X14).